The sequence spans 697 residues: Elongation factor G (697 aa).

Residues 10-285 (ERTRNIGIMA…AVVDYLPSPL (276 aa)) form the tr-type G domain. GTP contacts are provided by residues 19 to 26 (AHIDAGKT), 83 to 87 (DTPGH), and 137 to 140 (NKMD).

The protein belongs to the TRAFAC class translation factor GTPase superfamily. Classic translation factor GTPase family. EF-G/EF-2 subfamily.

The protein localises to the cytoplasm. In terms of biological role, catalyzes the GTP-dependent ribosomal translocation step during translation elongation. During this step, the ribosome changes from the pre-translocational (PRE) to the post-translocational (POST) state as the newly formed A-site-bound peptidyl-tRNA and P-site-bound deacylated tRNA move to the P and E sites, respectively. Catalyzes the coordinated movement of the two tRNA molecules, the mRNA and conformational changes in the ribosome. This Pediococcus pentosaceus (strain ATCC 25745 / CCUG 21536 / LMG 10740 / 183-1w) protein is Elongation factor G.